Reading from the N-terminus, the 1199-residue chain is Pyruvate-flavodoxin oxidoreductase (1199 aa).

4Fe-4S ferredoxin-type domains follow at residues 699–728 (EIPV…AKVY) and 755–784 (FTIQ…EPSL). 12 residues coordinate [4Fe-4S] cluster: C708, C711, C714, C718, C764, C767, C770, C774, C838, C841, C866, and C1103.

This sequence belongs to the pyruvate:ferredoxin/flavodoxin oxidoreductase family. The cofactor is [4Fe-4S] cluster.

The enzyme catalyses oxidized [flavodoxin] + pyruvate + CoA + 2 H(+) = reduced [flavodoxin] + acetyl-CoA + CO2. In terms of biological role, oxidoreductase required for the transfer of electrons from pyruvate to flavodoxin, which reduces nitrogenase. This Nostoc sp. (strain PCC 7120 / SAG 25.82 / UTEX 2576) protein is Pyruvate-flavodoxin oxidoreductase (nifJ).